We begin with the raw amino-acid sequence, 206 residues long: uncharacterized protein (206 aa).

Its subcellular location is the plastid. It is found in the cyanelle. This is an uncharacterized protein from Cyanophora paradoxa.